A 286-amino-acid polypeptide reads, in one-letter code: MENLWFIIKAIIIGIVEGITEFLPVSSTGHMIIVEDLINFKEGVMPASLYTKQYIDAFTMIIQLGAILAIVVLYWDKIKRSFENFAPSKPKSGFKFWLNIAVSAVPAGVLGLKFHSKINEKLFNPGSVTAALIVGAIWMIFAEKRYRGKFTTKDIDNVTIKQAFIIGCFQCLALWPGMSRSASTIIGAWIVGLSTVAAAEFSFFLALPVMAGVTYKSLKDINVFALGSMHIVGLTVGFIVSFIVALIVVDKFITFLKKKPMRVFAMYRILLGIVLIILSLFNVISM.

7 consecutive transmembrane segments (helical) span residues 5-25, 55-75, 92-112, 122-142, 185-205, 229-249, and 264-284; these read WFII…FLPV, IDAF…VLYW, SGFK…VLGL, LFNP…MIFA, IIGA…SFFL, MHIV…LIVV, and FAMY…FNVI.

This sequence belongs to the UppP family.

The protein resides in the cell membrane. The catalysed reaction is di-trans,octa-cis-undecaprenyl diphosphate + H2O = di-trans,octa-cis-undecaprenyl phosphate + phosphate + H(+). Its function is as follows. Catalyzes the dephosphorylation of undecaprenyl diphosphate (UPP). Confers resistance to bacitracin. The sequence is that of Undecaprenyl-diphosphatase from Clostridium novyi (strain NT).